The sequence spans 376 residues: Anhydro-N-acetylmuramic acid kinase (376 aa).

11–18 (GTSMDGVD) serves as a coordination point for ATP.

This sequence belongs to the anhydro-N-acetylmuramic acid kinase family.

The catalysed reaction is 1,6-anhydro-N-acetyl-beta-muramate + ATP + H2O = N-acetyl-D-muramate 6-phosphate + ADP + H(+). It participates in amino-sugar metabolism; 1,6-anhydro-N-acetylmuramate degradation. It functions in the pathway cell wall biogenesis; peptidoglycan recycling. Its function is as follows. Catalyzes the specific phosphorylation of 1,6-anhydro-N-acetylmuramic acid (anhMurNAc) with the simultaneous cleavage of the 1,6-anhydro ring, generating MurNAc-6-P. Is required for the utilization of anhMurNAc either imported from the medium or derived from its own cell wall murein, and thus plays a role in cell wall recycling. The sequence is that of Anhydro-N-acetylmuramic acid kinase from Acinetobacter baylyi (strain ATCC 33305 / BD413 / ADP1).